The primary structure comprises 108 residues: Pumilarin (108 aa).

Residues 1-38 constitute a propeptide that is removed on maturation; it reads MTETKNEIKLHVLFGALAVGFLMLALFSFSLQMLPVAD. The cyclopeptide (Leu-Trp) cross-link spans 39-108; it reads LAKEFGIPGS…KKGRKAVIAW (70 aa).

In terms of processing, the cross-link permits a high resistance to proteolysis. Is more resistant to specific proteases than to unspecific proteases.

The protein localises to the secreted. In terms of biological role, cyclopeptide antibiotic that inhibits both Gram-positive and Gram-negative bacteria. Shows potent to weak activities against M.flavus (MIC=3 ug/ml), B.cereus (MIC=12 ug/ml), B.pumilus (MIC=12 ug/ml), E.coli (MIC=12 ug/ml), and S.pneumoniae (MIC=47 ug/ml). May act by forming pores. The sequence is that of Pumilarin from Bacillus safensis.